The chain runs to 571 residues: Gag-Pro polyprotein (571 aa).

The N-myristoyl glycine; by host moiety is linked to residue G2. Residues 100–103 (PPPY) carry the PPXY motif motif. Repeats lie at residues 342-362 (PPPGPCYRCLKEGHWARDCPT) and 367-387 (PPPGPCPICKDPSHWKRDCPT). 2 CCHC-type zinc fingers span residues 345–362 (GPCYRCLKEGHWARDCPT) and 370–387 (GPCPICKDPSHWKRDCPT). Positions 447–525 (ALMLVDTGAE…DKWQILGRDV (79 aa)) constitute a Peptidase A2 domain. D452 (protease; shared with dimeric partner) is an active-site residue.

In terms of assembly, homodimer; the homodimers are part of the immature particles. Interacts with human TSG101 and NEDD4; these interactions are essential for budding and release of viral particles. Homodimer; further assembles as homohexamers. Post-translationally, specific enzymatic cleavages by the viral protease yield mature proteins. The polyprotein is cleaved during and after budding, this process is termed maturation. The protease is autoproteolytically processed at its N- and C-termini. Gag polyprotein: Myristoylated. Myristoylation of the matrix (MA) domain mediates the transport and binding of Gag polyproteins to the host plasma membrane and is required for the assembly of viral particles.

The protein localises to the virion. The matrix domain targets Gag, Gag-Pro and Gag-Pro-Pol polyproteins to the plasma membrane via a multipartite membrane binding signal, that includes its myristoylated N-terminus. In terms of biological role, matrix protein. Its function is as follows. Forms the spherical core of the virus that encapsulates the genomic RNA-nucleocapsid complex. Functionally, binds strongly to viral nucleic acids and promote their aggregation. Also destabilizes the nucleic acids duplexes via highly structured zinc-binding motifs. The aspartyl protease mediates proteolytic cleavages of Gag and Gag-Pol polyproteins during or shortly after the release of the virion from the plasma membrane. Cleavages take place as an ordered, step-wise cascade to yield mature proteins. This process is called maturation. Displays maximal activity during the budding process just prior to particle release from the cell. The sequence is that of Gag-Pro polyprotein from Bos taurus (Bovine).